Here is a 413-residue protein sequence, read N- to C-terminus: Peptidase T (413 aa).

Residue His82 coordinates Zn(2+). Asp84 is a catalytic residue. Zn(2+) is bound at residue Asp145. The Proton acceptor role is filled by Glu179. Zn(2+) contacts are provided by Glu180, Asp202, and His384.

Belongs to the peptidase M20B family. It depends on Zn(2+) as a cofactor.

The protein resides in the cytoplasm. It catalyses the reaction Release of the N-terminal residue from a tripeptide.. In terms of biological role, cleaves the N-terminal amino acid of tripeptides. This Latilactobacillus sakei subsp. sakei (strain 23K) (Lactobacillus sakei subsp. sakei) protein is Peptidase T.